Reading from the N-terminus, the 547-residue chain is Apolipoprotein N-acyltransferase (547 aa).

The next 5 helical transmembrane spans lie at I31–F51, F71–Y91, L106–G126, L180–V200, and A210–W230. One can recognise a CN hydrolase domain in the interval V247–F515. Catalysis depends on E294, which acts as the Proton acceptor. K364 is an active-site residue. C418 (nucleophile) is an active-site residue. The helical transmembrane segment at F515 to I535 threads the bilayer.

Belongs to the CN hydrolase family. Apolipoprotein N-acyltransferase subfamily.

It localises to the cell inner membrane. The catalysed reaction is N-terminal S-1,2-diacyl-sn-glyceryl-L-cysteinyl-[lipoprotein] + a glycerophospholipid = N-acyl-S-1,2-diacyl-sn-glyceryl-L-cysteinyl-[lipoprotein] + a 2-acyl-sn-glycero-3-phospholipid + H(+). It functions in the pathway protein modification; lipoprotein biosynthesis (N-acyl transfer). Catalyzes the phospholipid dependent N-acylation of the N-terminal cysteine of apolipoprotein, the last step in lipoprotein maturation. This is Apolipoprotein N-acyltransferase from Bdellovibrio bacteriovorus (strain ATCC 15356 / DSM 50701 / NCIMB 9529 / HD100).